We begin with the raw amino-acid sequence, 200 residues long: NADH-quinone oxidoreductase subunit C (200 aa).

The protein belongs to the complex I 30 kDa subunit family. NDH-1 is composed of 14 different subunits. Subunits NuoB, C, D, E, F, and G constitute the peripheral sector of the complex.

The protein resides in the cell inner membrane. The enzyme catalyses a quinone + NADH + 5 H(+)(in) = a quinol + NAD(+) + 4 H(+)(out). In terms of biological role, NDH-1 shuttles electrons from NADH, via FMN and iron-sulfur (Fe-S) centers, to quinones in the respiratory chain. The immediate electron acceptor for the enzyme in this species is believed to be ubiquinone. Couples the redox reaction to proton translocation (for every two electrons transferred, four hydrogen ions are translocated across the cytoplasmic membrane), and thus conserves the redox energy in a proton gradient. The chain is NADH-quinone oxidoreductase subunit C from Thiobacillus denitrificans (strain ATCC 25259 / T1).